A 347-amino-acid chain; its full sequence is uncharacterized protein (347 aa).

An RING-type zinc finger spans residues 5–44 (CTICHNTPNRPVRLDCNHEFCYICIKGSIQNDMLNCAVCR). The WWE domain occupies 244 to 321 (NVQANFNVAR…NLDAWRQIKR (78 aa)).

This is an uncharacterized protein from Caenorhabditis elegans.